Here is a 197-residue protein sequence, read N- to C-terminus: C-type lectin domain family 3 member A (197 aa).

The first 22 residues, 1–22 (MAKNGLVICILVITLLLDQTTS), serve as a signal peptide directing secretion. Cystine bridges form between Cys68–Cys78, Cys95–Cys191, and Cys167–Cys183. In terms of domain architecture, C-type lectin spans 74-192 (VHKKCYLASE…CRSSKRYICE (119 aa)).

In terms of tissue distribution, restricted to cartilage and breast. Also expressed in breast cancers.

It localises to the secreted. Promotes cell adhesion to laminin-332 and fibronectin. The protein is C-type lectin domain family 3 member A (CLEC3A) of Homo sapiens (Human).